The sequence spans 947 residues: Netrin receptor unc-5 (947 aa).

The region spanning 43–141 (VIRNKPLRLQ…VHLAYMRKHF (99 aa)) is the Ig-like domain. 5 cysteine pairs are disulfide-bonded: cysteine 53/cysteine 112, cysteine 160/cysteine 209, cysteine 243/cysteine 295, cysteine 247/cysteine 299, and cysteine 273/cysteine 285. An Ig-like C2-type domain is found at 139–226 (KHFLKSPVAQ…SRKTDPVEVQ (88 aa)). The N-linked (GlcNAc...) asparagine glycan is linked to asparagine 206. TSP type-1 domains lie at 230 to 300 (DGGW…VPCK) and 302 to 354 (DGGW…QLCT). C-linked (Man) tryptophan glycans are attached at residues tryptophan 305 and tryptophan 308. The chain crosses the membrane as a helical span at residues 369–389 (GSVASIFIVASFILAILAMFC). Over 390-947 (CKRGNSKKSK…LSAFPQIVSP (558 aa)) the chain is Cytoplasmic. Tyrosine 510 is modified (phosphotyrosine). The region spanning 530–658 (NIVAAQIDSN…LNTNMFVQFE (129 aa)) is the ZU5 domain. The Death domain occupies 857–938 (ELARLLDMPN…DAVMVLERFL (82 aa)).

Belongs to the unc-5 family. Interacts (via cytoplasmic domain) with src-1 (via SH2 domain and SH3 domain). Interacts with madd-4. Interacts with unc-129; the interaction is direct. In terms of processing, phosphorylated on different cytoplasmic tyrosine residues. May be phosphorylated on tyrosine residues by src-1. Tyrosine phosphorylation is unc-6-dependent. Post-translationally, glycosylated via C-mannosylation by dpy-19 at Trp-305 and Trp-308. As to expression, expressed in cell bodies and axons of the VNC motor neurons that extend axons to the dorsal midline and within the ventral nerve cord. Expressed in gonadal distal tip cells (DTC).

Its subcellular location is the cell membrane. The protein localises to the membrane raft. The protein resides in the cell projection. It localises to the neuron projection. Functionally, receptor for netrin (unc-6) required for axon guidance. Mediates axon repulsion of neuronal growth cones in the developing nervous system upon ligand binding. Axon migration is mediated by the secreted unc-6, which promotes attraction of neurons and axons through binding to the unc-40 receptor, while repulsion requires both unc-5 and unc-40 receptors. Involved in the ventral-dorsal and anterior-posterior migration of distal tip cells along the body, which may be mediated by Wnt receptor mom-5, ced-10/Rac, ced-12/ELMO and mig-2/RhoG. In Caenorhabditis elegans, this protein is Netrin receptor unc-5.